A 250-amino-acid chain; its full sequence is 2,3-bisphosphoglycerate-dependent phosphoglycerate mutase (250 aa).

Residues 8 to 15 (RHGESQWN), 21 to 22 (TG), Arg-60, 87 to 90 (ERHY), Lys-98, 114 to 115 (RR), and 183 to 184 (GN) contribute to the substrate site. The Tele-phosphohistidine intermediate role is filled by His-9. Catalysis depends on Glu-87, which acts as the Proton donor/acceptor.

It belongs to the phosphoglycerate mutase family. BPG-dependent PGAM subfamily. As to quaternary structure, homodimer.

It catalyses the reaction (2R)-2-phosphoglycerate = (2R)-3-phosphoglycerate. It functions in the pathway carbohydrate degradation; glycolysis; pyruvate from D-glyceraldehyde 3-phosphate: step 3/5. In terms of biological role, catalyzes the interconversion of 2-phosphoglycerate and 3-phosphoglycerate. This is 2,3-bisphosphoglycerate-dependent phosphoglycerate mutase from Bordetella parapertussis (strain 12822 / ATCC BAA-587 / NCTC 13253).